We begin with the raw amino-acid sequence, 335 residues long: Nucleoid-associated protein PputGB1_0980 (335 aa).

This sequence belongs to the YejK family.

Its subcellular location is the cytoplasm. The protein localises to the nucleoid. The polypeptide is Nucleoid-associated protein PputGB1_0980 (Pseudomonas putida (strain GB-1)).